Reading from the N-terminus, the 142-residue chain is Large ribosomal subunit protein uL11 (142 aa).

This sequence belongs to the universal ribosomal protein uL11 family. As to quaternary structure, part of the ribosomal stalk of the 50S ribosomal subunit. Interacts with L10 and the large rRNA to form the base of the stalk. L10 forms an elongated spine to which L12 dimers bind in a sequential fashion forming a multimeric L10(L12)X complex. In terms of processing, one or more lysine residues are methylated.

Forms part of the ribosomal stalk which helps the ribosome interact with GTP-bound translation factors. This is Large ribosomal subunit protein uL11 from Bradyrhizobium diazoefficiens (strain JCM 10833 / BCRC 13528 / IAM 13628 / NBRC 14792 / USDA 110).